Here is a 658-residue protein sequence, read N- to C-terminus: Threonine--tRNA ligase (658 aa).

Residues 1–64 (MSNTVSLQFP…GASGKLEIIT (64 aa)) form the TGS domain. Positions 246-548 (DHRRLGREMD…LIENFAGHMP (303 aa)) are catalytic. Positions 343, 394, and 525 each coordinate Zn(2+).

This sequence belongs to the class-II aminoacyl-tRNA synthetase family. In terms of assembly, homodimer. Zn(2+) is required as a cofactor.

It is found in the cytoplasm. The catalysed reaction is tRNA(Thr) + L-threonine + ATP = L-threonyl-tRNA(Thr) + AMP + diphosphate + H(+). In terms of biological role, catalyzes the attachment of threonine to tRNA(Thr) in a two-step reaction: L-threonine is first activated by ATP to form Thr-AMP and then transferred to the acceptor end of tRNA(Thr). Also edits incorrectly charged L-seryl-tRNA(Thr). The chain is Threonine--tRNA ligase from Brucella abortus (strain S19).